Consider the following 119-residue polypeptide: Ribonuclease P protein component (119 aa).

The protein belongs to the RnpA family. Consists of a catalytic RNA component (M1 or rnpB) and a protein subunit.

The enzyme catalyses Endonucleolytic cleavage of RNA, removing 5'-extranucleotides from tRNA precursor.. In terms of biological role, RNaseP catalyzes the removal of the 5'-leader sequence from pre-tRNA to produce the mature 5'-terminus. It can also cleave other RNA substrates such as 4.5S RNA. The protein component plays an auxiliary but essential role in vivo by binding to the 5'-leader sequence and broadening the substrate specificity of the ribozyme. This Aromatoleum aromaticum (strain DSM 19018 / LMG 30748 / EbN1) (Azoarcus sp. (strain EbN1)) protein is Ribonuclease P protein component.